The primary structure comprises 752 residues: Photosystem I P700 chlorophyll a apoprotein A1 (752 aa).

Transmembrane regions (helical) follow at residues 73-96, 159-182, 198-222, 294-312, 349-372, 388-414, 436-458, and 533-551; these read IFAAHFGHLAVVTIWLSGMIFHGA, LYCTAIGGLVLAGLFLFAGWFHYH, LNHHLQVLLGCGSLGWAGHLIHVSA, IAHHHLAIAVVFIIAGHQY, WHAQLATNLAFLGSLTIIIAHHMY, LCIFTHHIWIGGFLIVGGAAHAAIFMV, AIISHLNWVCIFLGFHSFGLYIH, and FLIHHIHAFTIHVTVLILL. The [4Fe-4S] cluster site is built by Cys575 and Cys584. The next 2 membrane-spanning stretches (helical) occupy residues 591–612 and 666–688; these read HVFLGLFWMYNSLSIVIFHFSW and LSAYGLMFLGAHFVWAFSLMFLF. Residue His677 coordinates chlorophyll a'. Chlorophyll a contacts are provided by Met685 and Tyr693. Trp694 serves as a coordination point for phylloquinone. The chain crosses the membrane as a helical span at residues 726–746; sequence AVGVAHYLLGGIATTWAFFHA.

Belongs to the PsaA/PsaB family. The PsaA/B heterodimer binds the P700 chlorophyll special pair and subsequent electron acceptors. PSI consists of a core antenna complex that captures photons, and an electron transfer chain that converts photonic excitation into a charge separation. The cyanobacterial PSI reaction center is composed of one copy each of PsaA,B,C,D,E,F,I,J,K,L,M and X, and forms trimeric complexes. Requires PSI electron transfer chain: 5 chlorophyll a, 1 chlorophyll a', 2 phylloquinones and 3 4Fe-4S clusters. PSI core antenna: 90 chlorophyll a, 22 carotenoids, 3 phospholipids and 1 galactolipid. P700 is a chlorophyll a/chlorophyll a' dimer, A0 is one or more chlorophyll a, A1 is one or both phylloquinones and FX is a shared 4Fe-4S iron-sulfur center. as cofactor.

The protein localises to the cellular thylakoid membrane. It carries out the reaction reduced [plastocyanin] + hnu + oxidized [2Fe-2S]-[ferredoxin] = oxidized [plastocyanin] + reduced [2Fe-2S]-[ferredoxin]. Functionally, psaA and PsaB bind P700, the primary electron donor of photosystem I (PSI), as well as the electron acceptors A0, A1 and FX. PSI is a plastocyanin/cytochrome c6-ferredoxin oxidoreductase, converting photonic excitation into a charge separation, which transfers an electron from the donor P700 chlorophyll pair to the spectroscopically characterized acceptors A0, A1, FX, FA and FB in turn. Oxidized P700 is reduced on the lumenal side of the thylakoid membrane by plastocyanin or cytochrome c6. In Nostoc sp. (strain PCC 7120 / SAG 25.82 / UTEX 2576), this protein is Photosystem I P700 chlorophyll a apoprotein A1.